Here is a 97-residue protein sequence, read N- to C-terminus: Integration host factor subunit alpha (97 aa).

It belongs to the bacterial histone-like protein family. Heterodimer of an alpha and a beta chain.

Its function is as follows. This protein is one of the two subunits of integration host factor, a specific DNA-binding protein that functions in genetic recombination as well as in transcriptional and translational control. The protein is Integration host factor subunit alpha of Acinetobacter baylyi (strain ATCC 33305 / BD413 / ADP1).